The following is a 234-amino-acid chain: Small ribosomal subunit protein eS4 (234 aa).

One can recognise an S4 RNA-binding domain in the interval 43 to 106 (MPIAVWLRDY…NEYYRVLLDE (64 aa)).

Belongs to the eukaryotic ribosomal protein eS4 family.

This Nanoarchaeum equitans (strain Kin4-M) protein is Small ribosomal subunit protein eS4.